The chain runs to 500 residues: Cytochrome P450 2D16 (500 aa).

A Phosphoserine modification is found at serine 249. Cysteine 446 lines the heme pocket.

Belongs to the cytochrome P450 family. It depends on heme as a cofactor. Expressed at high levels in the inner zone of the adrenal cortex.

It is found in the endoplasmic reticulum membrane. It localises to the microsome membrane. It carries out the reaction an organic molecule + reduced [NADPH--hemoprotein reductase] + O2 = an alcohol + oxidized [NADPH--hemoprotein reductase] + H2O + H(+). Cytochromes P450 are a group of heme-thiolate monooxygenases. In liver microsomes, this enzyme is involved in an NADPH-dependent electron transport pathway. It oxidizes a variety of structurally unrelated compounds, including steroids, fatty acids, and xenobiotics. The sequence is that of Cytochrome P450 2D16 (CYP2D16) from Cavia porcellus (Guinea pig).